We begin with the raw amino-acid sequence, 46 residues long: Small, acid-soluble spore protein N (46 aa).

Residues 1 to 46 form a disordered region; it reads MAKMKHGSAQFRPDHLGTQPRKSDANKGKKMNTKGNENPQYIPPKG.

The protein belongs to the SspN family.

Its subcellular location is the spore core. This is Small, acid-soluble spore protein N from Halalkalibacterium halodurans (strain ATCC BAA-125 / DSM 18197 / FERM 7344 / JCM 9153 / C-125) (Bacillus halodurans).